A 270-amino-acid polypeptide reads, in one-letter code: Surfeit locus protein 4 homolog (270 aa).

A run of 6 helical transmembrane segments spans residues 65–85 (FLATVFVLVNLLGQLGGCGMV), 93–113 (IAVGLLFFIVVLQTVAYSILW), 115–135 (FQFLLRNFALIGALLLVLAEA), 178–198 (LSVWQVIQDIIGSILMVLVVL), 206–226 (ALILVALLTILNLYHNAWWTI), and 243–263 (TLSVIGGLLMIVSLGPGGVSM). The Di-lysine motif motif lies at 267-270 (KKKW).

This sequence belongs to the SURF4 family.

Its subcellular location is the endoplasmic reticulum membrane. Endoplasmic reticulum cargo receptor that mediates the export of lipoproteins by recruiting cargos into COPII vesicles to facilitate their secretion. This chain is Surfeit locus protein 4 homolog, found in Drosophila melanogaster (Fruit fly).